Reading from the N-terminus, the 244-residue chain is Tubulin-folding cofactor B (244 aa).

N-acetylmethionine is present on Met-1. Position 98 is a phosphotyrosine (Tyr-98). Phosphoserine is present on Ser-110. Residues 183 to 225 (GLTDFKPGYWIGIRYDEPLGKNDGSVNGKRYFECQAKYGAFVK) form the CAP-Gly domain. N6-acetyllysine is present on Lys-219.

It belongs to the TBCB family. In terms of assembly, supercomplex made of cofactors A to E. Cofactors A and D function by capturing and stabilizing tubulin in a quasi-native conformation. Cofactor E binds to the cofactor D-tubulin complex; interaction with cofactor C then causes the release of tubulin polypeptides that are committed to the native state. Cofactors B and E can form a heterodimer which binds to alpha-tubulin and enhances their ability to dissociate tubulin heterodimers. Interacts with GAN. Interacts with DCTN1. In terms of processing, ubiquitinated in the presence of GAN which targets it for degradation by the proteasome. Post-translationally, phosphorylation by PAK1 is required for normal function.

The protein resides in the cytoplasm. It is found in the cytoskeleton. In terms of biological role, binds to alpha-tubulin folding intermediates after their interaction with cytosolic chaperonin in the pathway leading from newly synthesized tubulin to properly folded heterodimer. Involved in regulation of tubulin heterodimer dissociation. May function as a negative regulator of axonal growth. The sequence is that of Tubulin-folding cofactor B (TBCB) from Bos taurus (Bovine).